The primary structure comprises 122 residues: Photosystem II extrinsic protein U (122 aa).

Positions 1–26 are cleaved as a signal peptide; that stretch reads MKTIVRLFAILMVLISSVGFVGSAVA.

Belongs to the PsbU family. In terms of assembly, PSII is composed of 1 copy each of membrane proteins PsbA, PsbB, PsbC, PsbD, PsbE, PsbF, PsbH, PsbI, PsbJ, PsbK, PsbL, PsbM, PsbT, PsbX, PsbY, PsbZ, Psb30/Ycf12, peripheral proteins PsbO, CyanoQ (PsbQ), PsbU, PsbV and a large number of cofactors. It forms dimeric complexes.

It localises to the cellular thylakoid membrane. In terms of biological role, one of the extrinsic, lumenal subunits of photosystem II (PSII). PSII is a light-driven water plastoquinone oxidoreductase, using light energy to abstract electrons from H(2)O, generating a proton gradient subsequently used for ATP formation. The extrinsic proteins stabilize the structure of photosystem II oxygen-evolving complex (OEC), the ion environment of oxygen evolution and protect the OEC against heat-induced inactivation. In Crocosphaera subtropica (strain ATCC 51142 / BH68) (Cyanothece sp. (strain ATCC 51142)), this protein is Photosystem II extrinsic protein U.